A 431-amino-acid polypeptide reads, in one-letter code: Adenylosuccinate synthetase (431 aa).

GTP contacts are provided by residues 12–18 and 40–42; these read GDEGKGK and GHT. Asp13 serves as the catalytic Proton acceptor. 2 residues coordinate Mg(2+): Asp13 and Gly40. Residues 13–16, 38–41, Thr131, Arg145, Gln225, Thr240, and Arg304 contribute to the IMP site; these read DEGK and NAGH. Residue His41 is the Proton donor of the active site. 300-306 is a substrate binding site; it reads VNTGRRR. GTP-binding positions include Arg306, 332–334, and 414–416; these read KLD and STS.

Belongs to the adenylosuccinate synthetase family. In terms of assembly, homodimer. Mg(2+) is required as a cofactor.

It localises to the cytoplasm. The enzyme catalyses IMP + L-aspartate + GTP = N(6)-(1,2-dicarboxyethyl)-AMP + GDP + phosphate + 2 H(+). Its pathway is purine metabolism; AMP biosynthesis via de novo pathway; AMP from IMP: step 1/2. Its function is as follows. Plays an important role in the de novo pathway of purine nucleotide biosynthesis. Catalyzes the first committed step in the biosynthesis of AMP from IMP. The chain is Adenylosuccinate synthetase from Beijerinckia indica subsp. indica (strain ATCC 9039 / DSM 1715 / NCIMB 8712).